The following is a 403-amino-acid chain: Na(+)/H(+) antiporter NhaA (403 aa).

The next 11 helical transmembrane spans lie at 23–43, 66–86, 101–121, 132–152, 161–181, 184–204, 219–239, 257–277, 297–317, 333–353, and 363–383; these read AFFLLLASLAGFVLANSPWAA, VAAWVSDGLMTLFFLVVILEI, VALPLIGAVGGMVVPALTYLL, GWAIPVATDAAFTLPIILALG, AWLMALAIFDDVLGIVVIALF, GSMYWPALLAVVLVTAALIGA, GILLWTALLDSGLHPTLAGVI, WVSSAVTPLVTWIVLPLFGFM, LGIMLGLMLGKPVGVFGATLL, GMLFGLSLLCGIGFTISLFVA, and IAPAKMGIFAGSALSALTGWF.

This sequence belongs to the NhaA Na(+)/H(+) (TC 2.A.33) antiporter family.

It localises to the cell inner membrane. It carries out the reaction Na(+)(in) + 2 H(+)(out) = Na(+)(out) + 2 H(+)(in). In terms of biological role, na(+)/H(+) antiporter that extrudes sodium in exchange for external protons. The protein is Na(+)/H(+) antiporter NhaA of Gluconobacter oxydans (strain 621H) (Gluconobacter suboxydans).